The primary structure comprises 360 residues: GDSL esterase/lipase At2g31550 (360 aa).

Residues 1–27 (MSTSKAITLTLFITTTLLASCDAAANA) form the signal peptide. A glycan (N-linked (GlcNAc...) asparagine) is linked at N26. The active-site Nucleophile is the S42. N-linked (GlcNAc...) asparagine glycosylation is found at N104 and N326. Residues D334 and H337 contribute to the active site.

It belongs to the 'GDSL' lipolytic enzyme family.

The protein localises to the secreted. The sequence is that of GDSL esterase/lipase At2g31550 from Arabidopsis thaliana (Mouse-ear cress).